The chain runs to 427 residues: Histidinol dehydrogenase (427 aa).

NAD(+) contacts are provided by Tyr123, Gln185, and Asn208. The substrate site is built by Ser231, Gln253, and His256. Residues Gln253 and His256 each contribute to the Zn(2+) site. Active-site proton acceptor residues include Glu321 and His322. Residues His322, Asp355, Glu409, and His414 each coordinate substrate. Asp355 provides a ligand contact to Zn(2+). His414 contacts Zn(2+).

Belongs to the histidinol dehydrogenase family. Zn(2+) is required as a cofactor.

The catalysed reaction is L-histidinol + 2 NAD(+) + H2O = L-histidine + 2 NADH + 3 H(+). It participates in amino-acid biosynthesis; L-histidine biosynthesis; L-histidine from 5-phospho-alpha-D-ribose 1-diphosphate: step 9/9. Functionally, catalyzes the sequential NAD-dependent oxidations of L-histidinol to L-histidinaldehyde and then to L-histidine. In Bacillus subtilis (strain 168), this protein is Histidinol dehydrogenase (hisD).